The primary structure comprises 300 residues: 4-hydroxybenzoate octaprenyltransferase (300 aa).

A run of 8 helical transmembrane segments spans residues isoleucine 32–alanine 52, leucine 55–isoleucine 75, leucine 108–isoleucine 128, tyrosine 149–alanine 169, alanine 178–methionine 198, alanine 222–histidine 242, valine 246–isoleucine 266, and phenylalanine 278–phenylalanine 298.

This sequence belongs to the UbiA prenyltransferase family. Mg(2+) is required as a cofactor.

It is found in the cell inner membrane. The catalysed reaction is all-trans-octaprenyl diphosphate + 4-hydroxybenzoate = 4-hydroxy-3-(all-trans-octaprenyl)benzoate + diphosphate. It functions in the pathway cofactor biosynthesis; ubiquinone biosynthesis. Functionally, catalyzes the prenylation of para-hydroxybenzoate (PHB) with an all-trans polyprenyl group. Mediates the second step in the final reaction sequence of ubiquinone-8 (UQ-8) biosynthesis, which is the condensation of the polyisoprenoid side chain with PHB, generating the first membrane-bound Q intermediate 3-octaprenyl-4-hydroxybenzoate. The polypeptide is 4-hydroxybenzoate octaprenyltransferase (Hahella chejuensis (strain KCTC 2396)).